Consider the following 168-residue polypeptide: Protein-export protein SecB (168 aa).

This sequence belongs to the SecB family. As to quaternary structure, homotetramer, a dimer of dimers. One homotetramer interacts with 1 SecA dimer.

Its subcellular location is the cytoplasm. In terms of biological role, one of the proteins required for the normal export of preproteins out of the cell cytoplasm. It is a molecular chaperone that binds to a subset of precursor proteins, maintaining them in a translocation-competent state. It also specifically binds to its receptor SecA. This is Protein-export protein SecB from Saccharophagus degradans (strain 2-40 / ATCC 43961 / DSM 17024).